The primary structure comprises 465 residues: ATP synthase subunit beta (465 aa).

152–159 lines the ATP pocket; sequence GGAGVGKT.

Belongs to the ATPase alpha/beta chains family. F-type ATPases have 2 components, CF(1) - the catalytic core - and CF(0) - the membrane proton channel. CF(1) has five subunits: alpha(3), beta(3), gamma(1), delta(1), epsilon(1). CF(0) has three main subunits: a(1), b(2) and c(9-12). The alpha and beta chains form an alternating ring which encloses part of the gamma chain. CF(1) is attached to CF(0) by a central stalk formed by the gamma and epsilon chains, while a peripheral stalk is formed by the delta and b chains.

The protein localises to the cell inner membrane. The catalysed reaction is ATP + H2O + 4 H(+)(in) = ADP + phosphate + 5 H(+)(out). In terms of biological role, produces ATP from ADP in the presence of a proton gradient across the membrane. The catalytic sites are hosted primarily by the beta subunits. The chain is ATP synthase subunit beta from Campylobacter jejuni subsp. jejuni serotype O:6 (strain 81116 / NCTC 11828).